Consider the following 212-residue polypeptide: MGVTCVSQMPVAEGKSVQQTVELLTRKLEMLGAEKQGTFCVDCETYHTAASTLGSQGQTGKLMYVMHNSEYPLSCFALFENGPCLIADTNFDVLMVKLKGFFQSAKASKIETRGTRYQYCDFLVKVGTVTMGPSARGISVEVEYGPCVVASDCWSLLLEFLQSFLGSHTPGAPAVFGNRHDAVYGPADTMVQYMELFNKIRKQQQVPVAGIR.

It belongs to the Mediator complex subunit 20 family. In terms of assembly, interacts with PPARG. Component of the Mediator complex, which is composed of MED1, MED4, MED6, MED7, MED8, MED9, MED10, MED11, MED12, MED13, MED13L, MED14, MED15, MED16, MED17, MED18, MED19, MED20, MED21, MED22, MED23, MED24, MED25, MED26, MED27, MED29, MED30, MED31, CCNC, CDK8 and CDC2L6/CDK11. The MED12, MED13, CCNC and CDK8 subunits form a distinct module termed the CDK8 module. Mediator containing the CDK8 module is less active than Mediator lacking this module in supporting transcriptional activation. Individual preparations of the Mediator complex lacking one or more distinct subunits have been variously termed ARC, CRSP, DRIP, PC2, SMCC and TRAP.

It localises to the nucleus. Functionally, component of the Mediator complex, a coactivator involved in the regulated transcription of nearly all RNA polymerase II-dependent genes. Mediator functions as a bridge to convey information from gene-specific regulatory proteins to the basal RNA polymerase II transcription machinery. Mediator is recruited to promoters by direct interactions with regulatory proteins and serves as a scaffold for the assembly of a functional preinitiation complex with RNA polymerase II and the general transcription factors. This Homo sapiens (Human) protein is Mediator of RNA polymerase II transcription subunit 20 (MED20).